A 1172-amino-acid chain; its full sequence is Lysylphosphatidylglycerol biosynthesis bifunctional protein LysX (1172 aa).

The disordered stretch occupies residues 1-34 (MGLHLTVPGLRRDGRGVQSNSHDTSSKTTADISR). The interval 1 to 663 (MGLHLTVPGL…LLHHDGSAPD (663 aa)) is phosphatidylglycerol lysyltransferase. Positions 17–31 (VQSNSHDTSSKTTAD) are enriched in polar residues. 7 helical membrane passes run 80-100 (VPAAAGWTVGVIATLSLLASV), 122-142 (FPDTNFAWSFVLALLAAALTA), 146-166 (IAWLVLLANMVLAAVVNAAEI), 177-197 (FGENLGFAVHVVAIVVLVLGY), 214-234 (AVWLAGAVVGIVASWGLVELF), 272-292 (AIFGLFGAFALIGAAIVLFLS), and 612-632 (VIPRVGVASVIAEGFLVLPFS). Residues 664–1172 (VSGLRQVGLT…TLPFPLAKPH (509 aa)) form a lysine--tRNA ligase region. The segment at residues 726 to 804 (VSVSGRIMRI…SLIVSGWRLI (79 aa)) is a DNA-binding region (OB). The Mg(2+) site is built by Asp-1084 and Glu-1091.

This sequence in the N-terminal section; belongs to the LPG synthetase family. The protein in the C-terminal section; belongs to the class-II aminoacyl-tRNA synthetase family. Mg(2+) is required as a cofactor.

The protein localises to the cell membrane. The catalysed reaction is tRNA(Lys) + L-lysine + ATP = L-lysyl-tRNA(Lys) + AMP + diphosphate. It catalyses the reaction L-lysyl-tRNA(Lys) + a 1,2-diacyl-sn-glycero-3-phospho-(1'-sn-glycerol) = a 1,2-diacyl-sn-glycero-3-phospho-1'-(3'-O-L-lysyl)-sn-glycerol + tRNA(Lys). Its function is as follows. Catalyzes the production of L-lysyl-tRNA(Lys)transfer and the transfer of a lysyl group from L-lysyl-tRNA(Lys) to membrane-bound phosphatidylglycerol (PG), which produces lysylphosphatidylglycerol (LPG), one of the components of the bacterial membrane with a positive net charge. LPG synthesis contributes to the resistance to cationic antimicrobial peptides (CAMPs) and likely protects M.tuberculosis against the CAMPs produced by competiting microorganisms (bacteriocins). In fact, the modification of anionic phosphatidylglycerol with positively charged L-lysine results in repulsion of the peptides. The chain is Lysylphosphatidylglycerol biosynthesis bifunctional protein LysX (lysX) from Mycobacterium tuberculosis (strain F11).